Here is a 67-residue protein sequence, read N- to C-terminus: Conotoxin Cl6.8 (67 aa).

A signal peptide spans 1–22 (MKVTAVLMVAVLVLTACQLTTA). Residues 23–39 (NTTDYVRRILARKSTMS) constitute a propeptide that is removed on maturation. 3 cysteine pairs are disulfide-bonded: Cys43/Cys58, Cys50/Cys62, and Cys57/Cys66. Residue Cys66 is modified to Cysteine amide.

The protein belongs to the conotoxin O1 superfamily. In terms of tissue distribution, expressed by the venom duct.

The protein localises to the secreted. This Californiconus californicus (California cone) protein is Conotoxin Cl6.8.